The sequence spans 510 residues: MKKVIIRKTEEIKNWRRNINSDINFIPTMGNLHNGHKTLISTAKNANSNVNLVSIFVNPLQFDNKSDLENYPKTIDNDIKISFENGADVIFIPSTEEIYPSDNKNITFLKAPLELSSSLCGLNRIGHFDGVCTVVYKLLNLIKPKNLYLGEKDWQQLLILKNLVLTKKLDVAIKSIPTQRDFDGIPLSSRNVHLSNNERKLIRFFSHELLVAKENFQQEKKINLKEIIQKLSAQKISIEYLEHLHPYTLQESKVEDNISILAGAIRCGETRLIDHVFLMKRSPIIAIDGPAGSGKSTVTQLIAKKLKLLYLDTGAMYRALSWLLIKENIDYKEEKKLQNILKDISIVFKSNTNSQQDVFINNYCVTEEIRSQEISSIVSKISSIKEVREFLVEEQRKIGESGGLVAEGRDIGTTVFPDAELKIFLTASIDERAKRRKSDKKSKDSQEIDLHKLKELIKKRDFEDSNREISPLIKANDAIEIITDGCSINEVVDKIIDLYNDKIPKETQIR.

The pantoate--beta-alanine ligase stretch occupies residues 1-276; it reads MKKVIIRKTE…CGETRLIDHV (276 aa). Position 29-36 (29-36) interacts with ATP; it reads MGNLHNGH. H36 acts as the Proton donor in catalysis. Residue Q61 coordinates (R)-pantoate. Q61 provides a ligand contact to beta-alanine. 150-153 serves as a coordination point for ATP; that stretch reads GEKD. Q156 contributes to the (R)-pantoate binding site. Position 187-190 (187-190) interacts with ATP; it reads LSSR. Positions 277 to 510 are cytidylate kinase; sequence FLMKRSPIIA…DKIPKETQIR (234 aa).

It in the N-terminal section; belongs to the pantothenate synthetase family. The protein in the C-terminal section; belongs to the cytidylate kinase family. Type 1 subfamily.

It is found in the cytoplasm. It carries out the reaction (R)-pantoate + beta-alanine + ATP = (R)-pantothenate + AMP + diphosphate + H(+). It catalyses the reaction CMP + ATP = CDP + ADP. The catalysed reaction is dCMP + ATP = dCDP + ADP. Its pathway is cofactor biosynthesis; (R)-pantothenate biosynthesis; (R)-pantothenate from (R)-pantoate and beta-alanine: step 1/1. Functionally, catalyzes the condensation of pantoate with beta-alanine in an ATP-dependent reaction via a pantoyl-adenylate intermediate. Catalyzes the transfer of a phosphate group from ATP to either CMP or dCMP to form CDP or dCDP and ADP, respectively. The polypeptide is Bifunctional pantoate ligase/cytidylate kinase (Prochlorococcus marinus (strain MIT 9312)).